A 274-amino-acid chain; its full sequence is Thiamine kinase (274 aa).

This sequence belongs to the thiamine kinase family.

It carries out the reaction thiamine + ATP = thiamine phosphate + ADP + H(+). The protein operates within cofactor biosynthesis; thiamine diphosphate biosynthesis; thiamine phosphate from thiamine: step 1/1. Catalyzes the ATP-dependent phosphorylation of thiamine to thiamine phosphate. Is involved in thiamine salvage. This is Thiamine kinase from Escherichia coli O17:K52:H18 (strain UMN026 / ExPEC).